Here is a 762-residue protein sequence, read N- to C-terminus: 5-methyltetrahydropteroyltriglutamate--homocysteine methyltransferase (762 aa).

Residues 17-20 (REWK) and K111 each bind 5-methyltetrahydropteroyltri-L-glutamate. Residues 435–437 (IGS) and E488 each bind L-homocysteine. Residues 435–437 (IGS) and E488 each bind L-methionine. 5-methyltetrahydropteroyltri-L-glutamate is bound by residues 519–520 (RC) and W565. Residue D603 participates in L-homocysteine binding. An L-methionine-binding site is contributed by D603. E609 lines the 5-methyltetrahydropteroyltri-L-glutamate pocket. 3 residues coordinate Zn(2+): H645, C647, and E669. H698 (proton donor) is an active-site residue. C730 provides a ligand contact to Zn(2+).

Belongs to the vitamin-B12 independent methionine synthase family. Requires Zn(2+) as cofactor.

The enzyme catalyses 5-methyltetrahydropteroyltri-L-glutamate + L-homocysteine = tetrahydropteroyltri-L-glutamate + L-methionine. The protein operates within amino-acid biosynthesis; L-methionine biosynthesis via de novo pathway; L-methionine from L-homocysteine (MetE route): step 1/1. Catalyzes the transfer of a methyl group from 5-methyltetrahydrofolate to homocysteine resulting in methionine formation. This Bacillus cereus (strain ATCC 14579 / DSM 31 / CCUG 7414 / JCM 2152 / NBRC 15305 / NCIMB 9373 / NCTC 2599 / NRRL B-3711) protein is 5-methyltetrahydropteroyltriglutamate--homocysteine methyltransferase.